A 64-amino-acid polypeptide reads, in one-letter code: Large ribosomal subunit protein bL32 (64 aa).

The disordered stretch occupies residues 1–28 (MAVQKSRVTPSRRGQRRSHDALTAKKLS).

It belongs to the bacterial ribosomal protein bL32 family.

This chain is Large ribosomal subunit protein bL32 (rpmF), found in Xylella fastidiosa (strain 9a5c).